Here is a 36-residue protein sequence, read N- to C-terminus: Potassium channel toxin alpha-KTx 11.3 (36 aa).

3 cysteine pairs are disulfide-bonded: Cys8–Cys27, Cys13–Cys33, and Cys17–Cys35.

Belongs to the short scorpion toxin superfamily. Potassium channel inhibitor family. Alpha-KTx 11 subfamily. In terms of tissue distribution, expressed by the venom gland.

The protein resides in the secreted. Functionally, binds and inhibits voltage-sensitive potassium channels. Inhibits the vertebrate potassium channel Kv1.1/KCNA1 with low affinity. The polypeptide is Potassium channel toxin alpha-KTx 11.3 (Parabuthus granulatus (Granulated thick-tailed scorpion)).